The following is a 950-amino-acid chain: Protein translocase subunit SecA 1 (950 aa).

Residues Q83, 101 to 105 (GEGKT), and D490 contribute to the ATP site. Residues 864 to 950 (EGGAGRKNAA…AKPPKSVKKR (87 aa)) are disordered. Over residues 873 to 888 (AAREEAPSRLRAKGIE) the composition is skewed to basic and acidic residues.

It belongs to the SecA family. As to quaternary structure, monomer and homodimer. Part of the essential Sec protein translocation apparatus which comprises SecA, SecYEG and auxiliary proteins SecDF. Other proteins may also be involved.

The protein resides in the cell membrane. It is found in the cytoplasm. It catalyses the reaction ATP + H2O + cellular proteinSide 1 = ADP + phosphate + cellular proteinSide 2.. Functionally, part of the Sec protein translocase complex. Interacts with the SecYEG preprotein conducting channel. Has a central role in coupling the hydrolysis of ATP to the transfer of proteins into and across the cell membrane, serving as an ATP-driven molecular motor driving the stepwise translocation of polypeptide chains across the membrane. This is Protein translocase subunit SecA 1 from Mycobacterium ulcerans (strain Agy99).